We begin with the raw amino-acid sequence, 243 residues long: UPF0246 protein Sez_1855 (243 aa).

It belongs to the UPF0246 family.

This Streptococcus equi subsp. zooepidemicus (strain MGCS10565) protein is UPF0246 protein Sez_1855.